The sequence spans 120 residues: Large ribosomal subunit protein uL18 (120 aa).

This sequence belongs to the universal ribosomal protein uL18 family. Part of the 50S ribosomal subunit; part of the 5S rRNA/L5/L18/L25 subcomplex. Contacts the 5S and 23S rRNAs.

In terms of biological role, this is one of the proteins that bind and probably mediate the attachment of the 5S RNA into the large ribosomal subunit, where it forms part of the central protuberance. The chain is Large ribosomal subunit protein uL18 from Allorhizobium ampelinum (strain ATCC BAA-846 / DSM 112012 / S4) (Agrobacterium vitis (strain S4)).